We begin with the raw amino-acid sequence, 458 residues long: F-box/LRR-repeat protein At5g02910 (458 aa).

The F-box domain occupies 10 to 56; that stretch reads MDFISSLPDEILHHILSSVPTKSAIRTSLLSKRWRYVWSETPSLSID. LRR repeat units follow at residues 57–84, 86–112, 133–161, 162–187, 226–251, 260–285, 325–353, and 389–414; these read CRRA…HLHT, LLNR…SLES, KQLF…LSLS, NCTL…ELLY, CLRL…DLNI, TAGF…TIGG, KLLR…HLND, and ESNL…VVLL.

In Arabidopsis thaliana (Mouse-ear cress), this protein is F-box/LRR-repeat protein At5g02910.